Consider the following 166-residue polypeptide: Small ribosomal subunit protein uS5 (166 aa).

Residues 12–75 form the S5 DRBM domain; sequence YIEKLVQVNR…EAARRNMIQV (64 aa).

This sequence belongs to the universal ribosomal protein uS5 family. As to quaternary structure, part of the 30S ribosomal subunit. Contacts proteins S4 and S8.

In terms of biological role, with S4 and S12 plays an important role in translational accuracy. Functionally, located at the back of the 30S subunit body where it stabilizes the conformation of the head with respect to the body. In Pseudomonas entomophila (strain L48), this protein is Small ribosomal subunit protein uS5.